We begin with the raw amino-acid sequence, 396 residues long: Aspartate aminotransferase (396 aa).

Positions 34, 130, and 183 each coordinate L-aspartate. At lysine 246 the chain carries N6-(pyridoxal phosphate)lysine. Arginine 374 is an L-aspartate binding site.

It belongs to the class-I pyridoxal-phosphate-dependent aminotransferase family. Homodimer. Requires pyridoxal 5'-phosphate as cofactor.

The protein resides in the cytoplasm. The catalysed reaction is L-aspartate + 2-oxoglutarate = oxaloacetate + L-glutamate. In Haemophilus influenzae (strain ATCC 51907 / DSM 11121 / KW20 / Rd), this protein is Aspartate aminotransferase (aspC).